A 177-amino-acid polypeptide reads, in one-letter code: MSEFITVARPYAKAAFDFAVEHQSVERWQDMLAFAAEVTKNEQMAELLSGALAPETLAESFIAVCGEQLDENGQNLIRVMAENGRLKALPDVLEQFIHLRAVSEATAEVDVISAAALSEQQLAKISAAMEKRLSRKVKLNCKIDKSVMAGVIIRAGDMVIDGSVRGRLERLADVLQS.

Belongs to the ATPase delta chain family. F-type ATPases have 2 components, F(1) - the catalytic core - and F(0) - the membrane proton channel. F(1) has five subunits: alpha(3), beta(3), gamma(1), delta(1), epsilon(1). F(0) has three main subunits: a(1), b(2) and c(10-14). The alpha and beta chains form an alternating ring which encloses part of the gamma chain. F(1) is attached to F(0) by a central stalk formed by the gamma and epsilon chains, while a peripheral stalk is formed by the delta and b chains.

It localises to the cell inner membrane. Its function is as follows. F(1)F(0) ATP synthase produces ATP from ADP in the presence of a proton or sodium gradient. F-type ATPases consist of two structural domains, F(1) containing the extramembraneous catalytic core and F(0) containing the membrane proton channel, linked together by a central stalk and a peripheral stalk. During catalysis, ATP synthesis in the catalytic domain of F(1) is coupled via a rotary mechanism of the central stalk subunits to proton translocation. This protein is part of the stalk that links CF(0) to CF(1). It either transmits conformational changes from CF(0) to CF(1) or is implicated in proton conduction. In Escherichia coli O81 (strain ED1a), this protein is ATP synthase subunit delta.